The following is a 318-amino-acid chain: Lipid A biosynthesis acyltransferase (318 aa).

A helical membrane pass occupies residues 27–47; the sequence is PQYWGIWLGIFFLLLLAFVPF. Positions 145-150 match the HXXXXD motif motif; sequence HGWAID.

The protein belongs to the LpxL/LpxM/LpxP family. LpxM subfamily.

It is found in the cell inner membrane. The enzyme catalyses an alpha-Kdo-(2-&gt;4)-alpha-Kdo-(2-&gt;6)-(acyl)-lipid IVA + a fatty acyl-[ACP] = an alpha-Kdo-(2-&gt;4)-alpha-Kdo-(2-&gt;6)-lipid A + holo-[ACP]. It functions in the pathway glycolipid biosynthesis; KDO(2)-lipid A biosynthesis; KDO(2)-lipid A from CMP-3-deoxy-D-manno-octulosonate and lipid IV(A): step 4/4. The protein operates within bacterial outer membrane biogenesis; lipopolysaccharide biosynthesis. In terms of biological role, catalyzes the transfer of an acyl chain from an acyl-[acyl-carrier-protein] (ACP) to a Kdo(2)-(acyl)-lipid IV(A) to form a Kdo(2)-lipid A. The polypeptide is Lipid A biosynthesis acyltransferase (Haemophilus influenzae (strain ATCC 51907 / DSM 11121 / KW20 / Rd)).